The following is a 154-amino-acid chain: Aspartate carbamoyltransferase regulatory chain (154 aa).

The Zn(2+) site is built by Cys109, Cys114, Cys138, and Cys141.

This sequence belongs to the PyrI family. In terms of assembly, contains catalytic and regulatory chains. It depends on Zn(2+) as a cofactor.

Its function is as follows. Involved in allosteric regulation of aspartate carbamoyltransferase. The sequence is that of Aspartate carbamoyltransferase regulatory chain from Tolumonas auensis (strain DSM 9187 / NBRC 110442 / TA 4).